The primary structure comprises 481 residues: tRNA:m(4)X modification enzyme TRM13 homolog (481 aa).

N-acetylalanine is present on Ala2. The segment at 56-83 (RILCPLDPKHTVYEDQLAKHLKKCNSRE) adopts a CHHC U11-48K-type zinc-finger fold. The Zn(2+) site is built by Cys59, His65, His75, and Cys79. The stretch at 113–140 (SLSEEQLEKLIKKLRKASEGLNSTLKDH) forms a coiled coil. The tract at residues 381–408 (ETSNSTTKRQDNQNDDSEEHDDGGYRIT) is disordered.

Belongs to the methyltransferase TRM13 family.

The catalysed reaction is cytidine(4) in tRNA(Pro) + S-adenosyl-L-methionine = 2'-O-methylcytidine(4) in tRNA(Pro) + S-adenosyl-L-homocysteine + H(+). The enzyme catalyses cytidine(4) in tRNA(Gly)(GCC) + S-adenosyl-L-methionine = 2'-O-methylcytidine(4) in tRNA(Gly)(GCC) + S-adenosyl-L-homocysteine + H(+). It catalyses the reaction adenosine(4) in tRNA(His) + S-adenosyl-L-methionine = 2'-O-methyladenosine(4) in tRNA(His) + S-adenosyl-L-homocysteine + H(+). Its function is as follows. tRNA methylase which 2'-O-methylates cytidine(4) in tRNA(Pro) and tRNA(Gly)(GCC), and adenosine(4) in tRNA(His). This is tRNA:m(4)X modification enzyme TRM13 homolog (TRMT13) from Homo sapiens (Human).